We begin with the raw amino-acid sequence, 790 residues long: MATTSPCAAPSPSLRCPLALSHPFASPPPPPALRLAGPKLLPGRLAVSPPPGIPAVASALESLILDLDDDEEDEDEETEFGLFQGEAWAAADEREAVRSPELVVPELEELPEQWRRSRIAWLCKELPAYKHSTFTRILNAQRKWITQDDATYVAVHCLRIRNNDAAFRVYSWMVRQHWFRFNFALATRVADCLGRDGKVEKCREVFEAMVKQGRVPAESTFHILIVAYLSVPKGRCLEEACTIYNQMIQMGGYKPRLSLHNSLFRALVSKTGGTAKYNLKQAEFVYHNVVTTNLDVHKDVYAGLIWLHSYQDVIDRERIIALRKEMKQAGFDEGIDVLVSVMRAFSKEGNVAETEATWHNILQSGSDLPVQAYVCRMEAYARTGEPMKSLDMFKEMKDKNIPPNVASYHKIIEIMTKALEVDIVEQLMNEFIESDMKHLMPAFLDLMYMYMDLDMHEKLELTFLKCIARCRPNRILYTIYLESLVKVGNIEKAEEVFGEMHNNGMIGTNTKSCNIMLRGYLSAEDYQKAEKVYDMMSKKKYDVQADSLEKLQSGLLLNKKVIKPKTVSMKLDQEQREILIGLLLGGTRMESYAQRGVHIVHFQFQEDSNAHSVLRVHIHERFFEWLSSASRSFDDGSKIPYQFSTIPHQHFSFFVDQFFLKGQPVLPKLIHRWLTPRVLAYWFMFGGSKLPSGDIVLKLSGGNSEGVERIVNSLHTQSLTSKVKRKGRFFWIGFQGSNAESFWRIIEPHVLNNFASLVTQEGSSIGSDGTQDTDTDSDDDMQMSDTERDE.

The transit peptide at 1–56 (MATTSPCAAPSPSLRCPLALSHPFASPPPPPALRLAGPKLLPGRLAVSPPPGIPAV) directs the protein to the chloroplast. 10 PPR repeats span residues 182–216 (NFAL…GRVP), 217–254 (AEST…GGYK), 256–296 (RLSL…NLDV), 299–333 (DVYA…GFDE), 334–368 (GIDV…GSDL), 369–403 (PVQA…NIPP), 404–438 (NVAS…DMKH), 439–469 (LMPA…CIAR), 473–507 (NRIL…GMIG), and 509–543 (NTKS…KYDV). The tract at residues 762–790 (GSSIGSDGTQDTDTDSDDDMQMSDTERDE) is disordered. The span at 771 to 790 (QDTDTDSDDDMQMSDTERDE) shows a compositional bias: acidic residues.

The protein belongs to the PPR family. P subfamily.

It localises to the plastid. The protein localises to the chloroplast. In terms of biological role, promotes the splicing of group II introns in chloroplasts. Required for the splicing of intron 2 of plastid ycf3 transcripts, a factor required for the assembly of photosystem I (PSI). Involved in the splicing of atpF, ndhA, petB and rps16 chloroplastic transcripts. Required for the assembly of PSI. This chain is Pentatricopeptide repeat-containing protein OTP51, chloroplastic, found in Oryza sativa subsp. japonica (Rice).